The chain runs to 357 residues: Mitogen-activated protein kinase kinase SIPKK (357 aa).

Residues 70 to 330 (FEAVKVIGKG…ANELMRHPFI (261 aa)) form the Protein kinase domain. ATP-binding positions include 76 to 84 (IGKGNGGIV) and lysine 99. The active-site Proton acceptor is the aspartate 192.

The protein belongs to the protein kinase superfamily. STE Ser/Thr protein kinase family. MAP kinase kinase subfamily. Interacts with SIPK.

It catalyses the reaction L-tyrosyl-[protein] + ATP = O-phospho-L-tyrosyl-[protein] + ADP + H(+). It carries out the reaction L-seryl-[protein] + ATP = O-phospho-L-seryl-[protein] + ADP + H(+). The catalysed reaction is L-threonyl-[protein] + ATP = O-phospho-L-threonyl-[protein] + ADP + H(+). Its function is as follows. Phosphorylates myelin basic protein (MBP) in vitro. May be involved in disease resistance. In Nicotiana tabacum (Common tobacco), this protein is Mitogen-activated protein kinase kinase SIPKK.